A 230-amino-acid chain; its full sequence is Ribonuclease 3 (230 aa).

The 134-residue stretch at methionine 1–glycine 134 folds into the RNase III domain. Mg(2+) is bound at residue glutamate 47. Aspartate 51 is a catalytic residue. Positions 120 and 123 each coordinate Mg(2+). Glutamate 123 is a catalytic residue. Residues aspartate 160 to glutamate 229 enclose the DRBM domain.

The protein belongs to the ribonuclease III family. Homodimer. Mg(2+) is required as a cofactor.

It is found in the cytoplasm. The enzyme catalyses Endonucleolytic cleavage to 5'-phosphomonoester.. In terms of biological role, digests double-stranded RNA. Involved in the processing of primary rRNA transcript to yield the immediate precursors to the large and small rRNAs (23S and 16S). Processes some mRNAs, and tRNAs when they are encoded in the rRNA operon. Processes pre-crRNA and tracrRNA of type II CRISPR loci if present in the organism. This Streptococcus pyogenes serotype M3 (strain SSI-1) protein is Ribonuclease 3.